The chain runs to 446 residues: Chromosomal replication initiator protein DnaA (446 aa).

The interval 1–92 (MENISDLWNS…SQAEEEIDLP (92 aa)) is domain I, interacts with DnaA modulators. Residues 93–109 (PAKPNAAQDDSNHLPQS) are domain II. Residues 110–326 (MLNPKYTFDT…GALIRVVAYS (217 aa)) are domain III, AAA+ region. Residues Gly154, Gly156, Lys157, and Thr158 each coordinate ATP. The domain IV, binds dsDNA stretch occupies residues 327-446 (SLINKDINAD…QVEEINDILK (120 aa)).

The protein belongs to the DnaA family. As to quaternary structure, oligomerizes as a right-handed, spiral filament on DNA at oriC.

Its subcellular location is the cytoplasm. Functionally, plays an essential role in the initiation and regulation of chromosomal replication. ATP-DnaA binds to the origin of replication (oriC) to initiate formation of the DNA replication initiation complex once per cell cycle. Binds the DnaA box (a 9 base pair repeat at the origin) and separates the double-stranded (ds)DNA. Forms a right-handed helical filament on oriC DNA; dsDNA binds to the exterior of the filament while single-stranded (ss)DNA is stabiized in the filament's interior. The ATP-DnaA-oriC complex binds and stabilizes one strand of the AT-rich DNA unwinding element (DUE), permitting loading of DNA polymerase. After initiation quickly degrades to an ADP-DnaA complex that is not apt for DNA replication. Binds acidic phospholipids. This Bacillus anthracis (strain A0248) protein is Chromosomal replication initiator protein DnaA.